The chain runs to 233 residues: Sugar fermentation stimulation protein homolog (233 aa).

The protein belongs to the SfsA family.

This is Sugar fermentation stimulation protein homolog from Chelativorans sp. (strain BNC1).